Here is a 76-residue protein sequence, read N- to C-terminus: Exodeoxyribonuclease 7 small subunit (76 aa).

This sequence belongs to the XseB family. In terms of assembly, heterooligomer composed of large and small subunits.

The protein localises to the cytoplasm. The catalysed reaction is Exonucleolytic cleavage in either 5'- to 3'- or 3'- to 5'-direction to yield nucleoside 5'-phosphates.. In terms of biological role, bidirectionally degrades single-stranded DNA into large acid-insoluble oligonucleotides, which are then degraded further into small acid-soluble oligonucleotides. The chain is Exodeoxyribonuclease 7 small subunit from Geobacillus thermodenitrificans (strain NG80-2).